Consider the following 787-residue polypeptide: Signal transducer and activator of transcription 5B (787 aa).

Tyr90 is modified (phosphotyrosine). Residue Ser128 is modified to Phosphoserine. In terms of domain architecture, SH2 spans 589–686 (WNDGAILGFV…EVYSKYYTPV (98 aa)). Tyr682 is subject to Phosphotyrosine. The residue at position 699 (Tyr699) is a Phosphotyrosine; by HCK, JAK and PTK6.

Belongs to the transcription factor STAT family. As to quaternary structure, upon activation, forms a homodimer or a heterodimer with a related family member. Binds NR3C1. Interacts with NCOA1. Interacts with NMI. Interacts with SOCS7. Interacts (via SH2 domain) with INSR. Interacts with CPEB3; this inhibits STAT5B-mediated transcriptional activation. In terms of processing, tyrosine phosphorylated in response to signaling via activated KIT, resulting in translocation to the nucleus. Tyrosine phosphorylated in response to signaling via activated FLT3; wild-type FLT3 results in much weaker phosphorylation than constitutively activated mutant FLT3. Alternatively, can be phosphorylated by JAK2. Phosphorylation at Tyr-699 by PTK6 or HCK leads to an increase of its transcriptional activity.

It localises to the cytoplasm. Its subcellular location is the nucleus. Its function is as follows. Carries out a dual function: signal transduction and activation of transcription. Mediates cellular responses to the cytokine KITLG/SCF and other growth factors. Binds to the GAS element and activates PRL-induced transcription. Positively regulates hematopoietic/erythroid differentiation. The protein is Signal transducer and activator of transcription 5B (STAT5B) of Sus scrofa (Pig).